Here is an 877-residue protein sequence, read N- to C-terminus: Protein SEY1 homolog (877 aa).

The Cytoplasmic portion of the chain corresponds to 1–735 (MVAFAGGART…LRSIEGEKQN (735 aa)). The GB1/RHD3-type G domain maps to 49–307 (GITYHVVGVL…VPLDGIPSYL (259 aa)). A GTP-binding site is contributed by 59–66 (GGQSSGKS). Residues 388 to 410 (RIDIVRKTEAELEEELLKVELKL) are a coiled coil. Residues 736-756 (LPAWVLPVLLLLGWNEIWYVL) form a helical membrane-spanning segment. Topologically, residues 757-759 (SSP) are lumenal. Residues 760 to 780 (VLLVVVVIIAAVFLRGFLLTQ) traverse the membrane as a helical segment. Over 781–877 (WAIFEETGPT…KEEEVPTQKE (97 aa)) the chain is Cytoplasmic. The tract at residues 850 to 877 (PTVLPPSTTSATLTRRLKKEEEVPTQKE) is disordered. Positions 867–877 (KKEEEVPTQKE) are enriched in basic and acidic residues.

The protein belongs to the TRAFAC class dynamin-like GTPase superfamily. GB1/RHD3 GTPase family. RHD3 subfamily.

The protein localises to the endoplasmic reticulum membrane. Functionally, probable GTP-binding protein that may be involved in cell development. The sequence is that of Protein SEY1 homolog from Trypanosoma cruzi (strain CL Brener).